The sequence spans 353 residues: UPF0283 membrane protein YcjF (353 aa).

Over residues 1–19 the composition is skewed to basic and acidic residues; sequence MSEPLKPRIDFAEPLKEEP. The disordered stretch occupies residues 1-35; the sequence is MSEPLKPRIDFAEPLKEEPTSAFKAQQTFSEAESR. Transmembrane regions (helical) follow at residues 70–90, 100–120, and 213–233; these read MVMG…VQWT, VALG…GSVV, and ESTL…FIAW.

Belongs to the UPF0283 family.

The protein resides in the cell inner membrane. This is UPF0283 membrane protein YcjF from Salmonella enteritidis PT4 (strain P125109).